Reading from the N-terminus, the 199-residue chain is MTRFAEPMARLIEELRKLPGIGTRSAQRLAFHILRSSTADAEALAGAVRDLKAQLRLCSVCNNITDVDPCVFCSSPTRNQRLVCVVEEPTNIAAVEKTRGYNGVYHVLHGTLSPLHGVGPEHLRTVNLLARVERGEVDELILATSPTVEGEATANYLADLLRPLRVRLTRIATGVPAGSDIEYVDEVTMTRALEGRREL.

The C4-type zinc finger occupies 58-73 (CSVCNNITDVDPCVFC). Residues 81-176 (RLVCVVEEPT…RLTRIATGVP (96 aa)) enclose the Toprim domain.

It belongs to the RecR family.

Functionally, may play a role in DNA repair. It seems to be involved in an RecBC-independent recombinational process of DNA repair. It may act with RecF and RecO. In Acidobacterium capsulatum (strain ATCC 51196 / DSM 11244 / BCRC 80197 / JCM 7670 / NBRC 15755 / NCIMB 13165 / 161), this protein is Recombination protein RecR.